The following is a 210-amino-acid chain: Phosphate propanoyltransferase (210 aa).

26–28 (ISN) lines the CoA pocket. Residues His-30 and His-32 each contribute to the Zn(2+) site. Positions 71 and 78 each coordinate CoA. Arg-84 provides a ligand contact to phosphate. 4 residues coordinate Zn(2+): Glu-90, His-138, His-140, and His-186. CoA is bound at residue Asn-193.

This sequence belongs to the PduL family. Zn(2+) is required as a cofactor.

The protein localises to the bacterial microcompartment. The catalysed reaction is propanoyl-CoA + phosphate = propanoyl phosphate + CoA. Its pathway is polyol metabolism; 1,2-propanediol degradation. Functionally, involved in 1,2-propanediol (1,2-PD) utilization within the bacterial microcompartment (BMC) dedicated to 1,2-PD degradation by catalyzing the conversion of propanoyl-CoA to propanoyl-phosphate. Required for optimal growth on 1,2-PD. CoA is regenerated within the BMC (for use by PduP) via this enzyme, although there must also be cofactor transport across the BMC. Directly targeted to the BMC. In terms of biological role, expression of a cosmid containing the full 21-gene pdu operon in E.coli allows E.coli to grow on 1,2-propanediol (1,2-PD) with the appearance of bacterial microcompartments (BMC) in its cytoplasm. The 1,2-PD-specific bacterial microcompartment (BMC) concentrates low levels of 1,2-PD catabolic enzymes, concentrates volatile reaction intermediates thus enhancing pathway flux and keeps the level of toxic, mutagenic propionaldehyde low. This chain is Phosphate propanoyltransferase, found in Citrobacter freundii.